The following is a 143-amino-acid chain: MAIERTFSIIKPDAVAKNHIGAIYNRFETAGLKIIASKMVHLSQEQAEGFYAEHSERPFFGALVAFMTSGPIMVQTLEGENAVLAHREILGATNPAEAAEGTIRADFAESIDENAAHGSDSVASAEREIAYFFSTEELCPRTR.

ATP contacts are provided by Lys11, Phe59, Arg87, Thr93, Arg104, and Asn114. Catalysis depends on His117, which acts as the Pros-phosphohistidine intermediate.

It belongs to the NDK family. Homotetramer. It depends on Mg(2+) as a cofactor.

It localises to the cytoplasm. It catalyses the reaction a 2'-deoxyribonucleoside 5'-diphosphate + ATP = a 2'-deoxyribonucleoside 5'-triphosphate + ADP. It carries out the reaction a ribonucleoside 5'-diphosphate + ATP = a ribonucleoside 5'-triphosphate + ADP. Its function is as follows. Major role in the synthesis of nucleoside triphosphates other than ATP. The ATP gamma phosphate is transferred to the NDP beta phosphate via a ping-pong mechanism, using a phosphorylated active-site intermediate. This chain is Nucleoside diphosphate kinase, found in Shewanella halifaxensis (strain HAW-EB4).